The sequence spans 176 residues: Probable chemoreceptor glutamine deamidase CheD (176 aa).

This sequence belongs to the CheD family.

It carries out the reaction L-glutaminyl-[protein] + H2O = L-glutamyl-[protein] + NH4(+). Functionally, probably deamidates glutamine residues to glutamate on methyl-accepting chemotaxis receptors (MCPs), playing an important role in chemotaxis. This is Probable chemoreceptor glutamine deamidase CheD from Rhodospirillum rubrum (strain ATCC 11170 / ATH 1.1.1 / DSM 467 / LMG 4362 / NCIMB 8255 / S1).